Here is a 1258-residue protein sequence, read N- to C-terminus: MITSELPVLQDSTNETTAHSDAGSELEETEVKGKRKRGRPGRPPSTNKKPRKSPGEKSRIEAGIRGAGRGRANGHPQQNGEGEPVTLFEVVKLGKSAMQSVVDDWIESYKQDRDIALLDLINFFIQCSGCRGTVRIEMFRNMQNAEIIRKMTEEFDEDSGDYPLTMPGPQWKKFRSNFCEFIGVLIRQCQYSIIYDEYMMDTVISLLTGLSDSQVRAFRHTSTLAAMKLMTALVNVALNLSIHQDNTQRQYEAERNKMIGKRANERLELLLQKRKELQENQDEIENMMNSIFKGIFVHRYRDAIAEIRAICIEEIGVWMKMYSDAFLNDSYLKYVGWTLHDRQGEVRLKCLKALQSLYTNRELFPKLELFTNRFKDRIVSMTLDKEYDVAVEAIRLVTLILHGSEEALSNEDCENVYHLVYSAHRPVAVAAGEFLHKKLFSRHDPQAEEALAKRRGRNSPNGNLIRMLVLFFLESELHEHAAYLVDSLWESSQELLKDWECMTELLLEEPVQGEEAMSDRQESALIELMVCTIRQAAEAHPPVGRGTGKRVLTAKERKTQIDDRNKLTEHFIITLPMLLSKYSADAEKVANLLQIPQYFDLEIYSTGRMEKHLDALLKQIKFVVEKHVESDVLEACSKTYSILCSEEYTIQNRVDIARSQLIDEFVDRFNHSVEDLLQEGEEADDDDIYNVLSTLKRLTSFHNAHDLTKWDLFGNCYRLLKTGIEHGAMPEQIVVQALQCSHYSILWQLVKITDGSPSKEDLLVLRKTVKSFLAVCQQCLSNVNTPVKEQAFMLLCDLLMIFSHQLMTGGREGLQPLVFNPDTGLQSELLSFVMDHVFIDQDEENQSMEGDEEDEANKIEALHKRRNLLAAFSKLIIYDIVDMHAAADIFKHYMKYYNDYGDIIKETLSKTRQIDKIQCAKTLILSLQQLFNELVQEQGPNLDRTSAHVSGIKELARRFALTFGLDQIKTREAVATLHKDGIEFAFKYQNQKGQEYPPPNLAFLEVLSEFSSKLLRQDKKTVHSYLEKFLTEQMMERREDVWLPLISYRNSLVTGGEDDRMSVNSGSSSSKTSSVRNKKGRPPLHKKRVEDESLDNTWLNRTDTMIQTPGPLPAPQLTSTVLRENSRPMGDQIQEPESEHGSEPDFLHNPQMQISWLGQPKLEDLNRKDRTGMNYMKVRTGVRHAVRGLMEEDAEPIFEDVMMSSRSQLEDMNEEFEDTMVIDLPPSRNRRERAELRPDFFDSAAIIEDDSGFGMPMF.

The interval Met1 to Pro84 is disordered. Residues Gln10–His19 are compositionally biased toward polar residues. Ser24 carries the phosphoserine modification. Positions Ser53–Ala62 are enriched in basic and acidic residues. The SCD domain occupies Phe296–Met381. 3 positions are modified to phosphoserine: Ser756, Ser1062, and Ser1065. Disordered stretches follow at residues Gly1055–Asn1096 and Met1129–His1148. The span at Ser1062 to Ser1074 shows a compositional bias: low complexity. Basic residues predominate over residues Arg1076 to Lys1087. Ser1093 carries the phosphoserine modification. Positions Glu1137–Phe1146 are enriched in basic and acidic residues. A Glycyl lysine isopeptide (Lys-Gly) (interchain with G-Cter in SUMO2) cross-link involves residue Lys1161.

This sequence belongs to the SCC3 family. Cohesin complexes are composed of a heterodimer between a SMC1 protein (SMC1A or SMC1B) and SMC3, which are attached via their hinge domain, and RAD21 which link them at their heads, and one STAG protein (STAG1, STAG2 or STAG3). In cohesin complexes, STAG1 is mutually exclusive with STAG2 and STAG3. Interacts directly with RAD21 in cohesin complex. The cohesin complex interacts with the cohesin loading complex subunits NIPBL/Scc2 (via HEAT repeats) and MAU2/Scc4. NIPBL directly contacts all members of the complex, RAD21, SMC1A/B, SMC3 and STAG1. In terms of processing, phosphorylated by PLK1. The large dissociation of cohesin from chromosome arms during prophase is partly due to its phosphorylation.

The protein localises to the nucleus. It localises to the chromosome. Its subcellular location is the centromere. In terms of biological role, component of cohesin complex, a complex required for the cohesion of sister chromatids after DNA replication. The cohesin complex apparently forms a large proteinaceous ring within which sister chromatids can be trapped. At anaphase, the complex is cleaved and dissociates from chromatin, allowing sister chromatids to segregate. The cohesin complex may also play a role in spindle pole assembly during mitosis. This chain is Cohesin subunit SA-1 (STAG1), found in Homo sapiens (Human).